A 276-amino-acid chain; its full sequence is Large ribosomal subunit protein uL2 (276 aa).

Disordered regions lie at residues 37-59 (QFQK…GGHK) and 225-276 (VMNP…RHKR). Over residues 39-49 (QKSGRNNNGHI) the composition is skewed to polar residues. Residues 50–59 (TTRHKGGGHK) are compositionally biased toward basic residues.

The protein belongs to the universal ribosomal protein uL2 family. As to quaternary structure, part of the 50S ribosomal subunit. Forms a bridge to the 30S subunit in the 70S ribosome.

Functionally, one of the primary rRNA binding proteins. Required for association of the 30S and 50S subunits to form the 70S ribosome, for tRNA binding and peptide bond formation. It has been suggested to have peptidyltransferase activity; this is somewhat controversial. Makes several contacts with the 16S rRNA in the 70S ribosome. This Cupriavidus pinatubonensis (strain JMP 134 / LMG 1197) (Cupriavidus necator (strain JMP 134)) protein is Large ribosomal subunit protein uL2.